Consider the following 335-residue polypeptide: Flagellar P-ring protein (335 aa).

The signal sequence occupies residues 1–24 (MNKITNFLILSAVLFFSLIESANA).

This sequence belongs to the FlgI family. In terms of assembly, the basal body constitutes a major portion of the flagellar organelle and consists of four rings (L,P,S, and M) mounted on a central rod.

It is found in the periplasm. Its subcellular location is the bacterial flagellum basal body. Its function is as follows. Assembles around the rod to form the L-ring and probably protects the motor/basal body from shearing forces during rotation. This Bdellovibrio bacteriovorus (strain ATCC 15356 / DSM 50701 / NCIMB 9529 / HD100) protein is Flagellar P-ring protein.